Reading from the N-terminus, the 328-residue chain is Aspartate carbamoyltransferase catalytic subunit (328 aa).

Residues Arg55 and Thr56 each coordinate carbamoyl phosphate. Lys83 provides a ligand contact to L-aspartate. Carbamoyl phosphate-binding residues include Arg105, His135, and Gln138. L-aspartate contacts are provided by Arg176 and Arg230. Residues Gly271 and Pro272 each contribute to the carbamoyl phosphate site.

Belongs to the aspartate/ornithine carbamoyltransferase superfamily. ATCase family. As to quaternary structure, heterododecamer (2C3:3R2) of six catalytic PyrB chains organized as two trimers (C3), and six regulatory PyrI chains organized as three dimers (R2).

It catalyses the reaction carbamoyl phosphate + L-aspartate = N-carbamoyl-L-aspartate + phosphate + H(+). The protein operates within pyrimidine metabolism; UMP biosynthesis via de novo pathway; (S)-dihydroorotate from bicarbonate: step 2/3. In terms of biological role, catalyzes the condensation of carbamoyl phosphate and aspartate to form carbamoyl aspartate and inorganic phosphate, the committed step in the de novo pyrimidine nucleotide biosynthesis pathway. This is Aspartate carbamoyltransferase catalytic subunit from Streptomyces griseus subsp. griseus (strain JCM 4626 / CBS 651.72 / NBRC 13350 / KCC S-0626 / ISP 5235).